A 79-amino-acid chain; its full sequence is Crassicorin-I (79 aa).

An N-terminal signal peptide occupies residues 1-19; it reads MKLFLVSIVLVGMLVLAAA. The propeptide occupies 20 to 39; that stretch reads RPERDIDSFDEQEEKGFVKR. 3 disulfides stabilise this stretch: C43–C76, C45–C69, and C59–C77.

Belongs to the sea anemone type 3 (BDS) potassium channel toxin family. In terms of tissue distribution, highly expressed by the mesenteries. Moderately expressed by the pharynx. Weakly expressed by the gonad and pedal disk. No expression in tentacle.

Its subcellular location is the secreted. It is found in the nematocyst. Peptide with both antimicrobial and neurotoxin activities. Cationic AMP with antibacterial activity against both Gram-positive bacteria (B.subtilis, MIC=11.49 ug/mL) and Gram-negative bacteria (E.coli (MIC=12.21 ug/mL) and S.enterica (MIC=11.95 ug/mL)). Shows no significant antimicrobial activity against bacteria S.aureus and P.aeruginosa, as well as the fungus C.albicans. In vivo, induces reversible paralytic activity towards the shrimp P.paucidens. May act by impairing sodium or potassium channels in the prey. The sequence is that of Crassicorin-I from Urticina crassicornis (Mottled anemone).